Reading from the N-terminus, the 511-residue chain is Adenosine deaminase 2 (511 aa).

Residues 1–29 (MLVDGPSERPALCFLLLAVAMSFFGSALS) form the signal peptide. Positions 30 to 100 (IDETRAHLLL…HLIERSQVFN (71 aa)) are dimerization. Zn(2+) is bound by residues His112 and His114. Asp115 provides a ligand contact to substrate. N-linked (GlcNAc...) asparagine glycosylation occurs at Asn127. Residues 127-185 (NVTYRPHCHICFTPRGIMQFRFAHPTPRPSEKCSKWILLEDYRKRVQNVTEFDDSLLRN) are PRB domain. A disulfide bond links Cys137 and Cys159. Residues Asn174 and Asn185 are each glycosylated (N-linked (GlcNAc...) asparagine). Residues 204–211 (WSKFETIF), His293, and Gly326 each bind substrate. His356 contributes to the Zn(2+) binding site. Glu359 serves as the catalytic Proton donor. N-linked (GlcNAc...) asparagine glycosylation is present at Asn378. His384 serves as the catalytic Proton acceptor. Asp441 is a Zn(2+) binding site. Residue Asp442 coordinates substrate.

This sequence belongs to the metallo-dependent hydrolases superfamily. Adenosine and AMP deaminases family. ADGF subfamily. As to quaternary structure, homodimer. Interacts with adenosine receptors. Binds heparin. The cofactor is Zn(2+). In terms of tissue distribution, detected in blood plasma (at protein level). Widely expressed, with most abundant expression in human adult heart, lung, lymphoblasts, and placenta as well as fetal lung, liver, and kidney. In embryo, expressed in the outflow tract and atrium of the developing heart, the VII/VIII cranial nerve ganglion, and the notochord.

It is found in the secreted. The catalysed reaction is adenosine + H2O + H(+) = inosine + NH4(+). Its function is as follows. Adenosine deaminase that may contribute to the degradation of extracellular adenosine, a signaling molecule that controls a variety of cellular responses. Requires elevated adenosine levels for optimal enzyme activity. Binds to cell surfaces via proteoglycans and may play a role in the regulation of cell proliferation and differentiation, independently of its enzyme activity. This Homo sapiens (Human) protein is Adenosine deaminase 2.